A 288-amino-acid chain; its full sequence is UTP--glucose-1-phosphate uridylyltransferase (288 aa).

This sequence belongs to the UDPGP type 2 family.

It catalyses the reaction alpha-D-glucose 1-phosphate + UTP + H(+) = UDP-alpha-D-glucose + diphosphate. It functions in the pathway glycolipid metabolism; diglucosyl-diacylglycerol biosynthesis. Its function is as follows. Catalyzes the formation of UDP-glucose from glucose-1-phosphate and UTP. This is an intermediate step in the biosynthesis of diglucosyl-diacylglycerol (Glc2-DAG), i.e. the predominant glycolipid found in the S.aureus membrane, which is also used as a membrane anchor for lipoteichoic acid (LTA). This chain is UTP--glucose-1-phosphate uridylyltransferase (gtaB), found in Staphylococcus aureus (strain MSSA476).